The sequence spans 486 residues: N-succinylglutamate 5-semialdehyde dehydrogenase (486 aa).

An NAD(+)-binding site is contributed by 220–225 (GSSRTG). Catalysis depends on residues glutamate 243 and cysteine 277.

This sequence belongs to the aldehyde dehydrogenase family. AstD subfamily.

It carries out the reaction N-succinyl-L-glutamate 5-semialdehyde + NAD(+) + H2O = N-succinyl-L-glutamate + NADH + 2 H(+). The protein operates within amino-acid degradation; L-arginine degradation via AST pathway; L-glutamate and succinate from L-arginine: step 4/5. Its function is as follows. Catalyzes the NAD-dependent reduction of succinylglutamate semialdehyde into succinylglutamate. This chain is N-succinylglutamate 5-semialdehyde dehydrogenase, found in Shewanella baltica (strain OS185).